The primary structure comprises 392 residues: Probable tRNA sulfurtransferase (392 aa).

Residues 61–168 (DEALKLLSKV…EFTYIYSEII (108 aa)) form the THUMP domain. ATP contacts are provided by residues 185–186 (LL), 210–211 (HF), R267, G289, and Q298.

This sequence belongs to the ThiI family.

It is found in the cytoplasm. It catalyses the reaction [ThiI sulfur-carrier protein]-S-sulfanyl-L-cysteine + a uridine in tRNA + 2 reduced [2Fe-2S]-[ferredoxin] + ATP + H(+) = [ThiI sulfur-carrier protein]-L-cysteine + a 4-thiouridine in tRNA + 2 oxidized [2Fe-2S]-[ferredoxin] + AMP + diphosphate. The catalysed reaction is [ThiS sulfur-carrier protein]-C-terminal Gly-Gly-AMP + S-sulfanyl-L-cysteinyl-[cysteine desulfurase] + AH2 = [ThiS sulfur-carrier protein]-C-terminal-Gly-aminoethanethioate + L-cysteinyl-[cysteine desulfurase] + A + AMP + 2 H(+). The protein operates within cofactor biosynthesis; thiamine diphosphate biosynthesis. Its function is as follows. Catalyzes the ATP-dependent transfer of a sulfur to tRNA to produce 4-thiouridine in position 8 of tRNAs, which functions as a near-UV photosensor. Also catalyzes the transfer of sulfur to the sulfur carrier protein ThiS, forming ThiS-thiocarboxylate. This is a step in the synthesis of thiazole, in the thiamine biosynthesis pathway. The sulfur is donated as persulfide by IscS. The chain is Probable tRNA sulfurtransferase from Acetivibrio thermocellus (strain ATCC 27405 / DSM 1237 / JCM 9322 / NBRC 103400 / NCIMB 10682 / NRRL B-4536 / VPI 7372) (Clostridium thermocellum).